We begin with the raw amino-acid sequence, 415 residues long: 1-deoxy-D-xylulose 5-phosphate reductoisomerase (415 aa).

Positions 10, 11, 12, 13, 36, 37, 38, and 128 each coordinate NADPH. A 1-deoxy-D-xylulose 5-phosphate-binding site is contributed by Lys-129. Residue Glu-130 coordinates NADPH. Asp-154 contacts Mn(2+). Ser-155, Glu-156, Ser-192, and His-215 together coordinate 1-deoxy-D-xylulose 5-phosphate. Mn(2+) is bound at residue Glu-156. Gly-221 contacts NADPH. 4 residues coordinate 1-deoxy-D-xylulose 5-phosphate: Ser-228, Asn-233, Lys-234, and Glu-237. Glu-237 contributes to the Mn(2+) binding site.

The protein belongs to the DXR family. Mg(2+) serves as cofactor. The cofactor is Mn(2+).

The enzyme catalyses 2-C-methyl-D-erythritol 4-phosphate + NADP(+) = 1-deoxy-D-xylulose 5-phosphate + NADPH + H(+). Its pathway is isoprenoid biosynthesis; isopentenyl diphosphate biosynthesis via DXP pathway; isopentenyl diphosphate from 1-deoxy-D-xylulose 5-phosphate: step 1/6. Catalyzes the NADPH-dependent rearrangement and reduction of 1-deoxy-D-xylulose-5-phosphate (DXP) to 2-C-methyl-D-erythritol 4-phosphate (MEP). The polypeptide is 1-deoxy-D-xylulose 5-phosphate reductoisomerase (Synechococcus sp. (strain CC9605)).